A 246-amino-acid polypeptide reads, in one-letter code: 33kDa venom protein (246 aa).

A signal peptide spans 1–20 (MAGKEVIFIMALFIAVESSP). Repeat copies occupy residues 83 to 96 (GGAVSESVKQKRET), 97 to 110 (AESLSGSFDKEKAS), 111 to 124 (AENLSGSFDQQKSS), 125 to 138 (VDEKSGSVGQQKGA), 139 to 152 (VEGQSGSGEQRRET), 153 to 166 (AESQSGSVDQEKAS), and 167 to 180 (AENLSGSIDKQKVT). The 12 X approximate tandem repeats of [AV][DE]X[VL]SGSX[DE]QX[KR]X[ST] stretch occupies residues 83 to 243 (GGAVSESVKQ…SGSVGNDDDI (161 aa)). Residues 88-246 (ESVKQKRETA…VGNDDDISVQ (159 aa)) are disordered. The segment covering 112–123 (ENLSGSFDQQKS) has biased composition (polar residues). The segment covering 175–186 (DKQKVTVEEKSE) has biased composition (basic and acidic residues). Residues 181–187 (VEEKSEP) form an 8; half-length repeat. Repeat copies occupy residues 188–201 (AQGQSGSVKQKRKT), 202–215 (TENVSGSLDQEKAS), 216–229 (AESLSGSFDQQKSS), and 230–243 (VDEKSGSVGNDDDI). The segment covering 217–228 (ESLSGSFDQQKS) has biased composition (polar residues).

Expressed by the venom gland.

The protein resides in the secreted. The polypeptide is 33kDa venom protein (Chelonus sp. nr. curvimaculatus (Parasitic wasp)).